A 336-amino-acid polypeptide reads, in one-letter code: G-protein coupled receptor homolog FPV027 (336 aa).

Over 1-31 the chain is Extracellular; that stretch reads MSMNNITSKMNQDSYGYFQLHMSDFTRVSLS. A glycan (N-linked (GlcNAc...) asparagine; by host) is linked at N5. A helical membrane pass occupies residues 32–52; it reads IVFTLVFLVGIIGNAVIIWFI. Over 53-63 the chain is Cytoplasmic; sequence GFKWTKTISTL. Residues 64–84 traverse the membrane as a helical segment; sequence LFINLALADSLFLIFIPVYTV. The Extracellular portion of the chain corresponds to 85–101; that stretch reads YVLSNFHWYLGEFLCRV. Residues C99 and C178 are joined by a disulfide bond. The chain crosses the membrane as a helical span at residues 102-122; sequence SSFFFTTNMYASMFLLTFISI. Residues 123–143 lie on the Cytoplasmic side of the membrane; that stretch reads DKYLTLTSHRLVYKYRKYRNY. The chain crosses the membrane as a helical span at residues 144-164; sequence YVCIGAIWCISIALGVPTLYY. Residues 165 to 200 are Extracellular-facing; sequence KRVILSSSRNETRCISYYGDDKHTAITIYRIIVCIR. N-linked (GlcNAc...) asparagine; by host glycosylation occurs at N174. Residues 201–221 traverse the membrane as a helical segment; sequence FIIGYVFPMTVILLSYALIVY. The Cytoplasmic portion of the chain corresponds to 222 to 240; sequence KVKFINKPPNRSFMITTAS. A helical membrane pass occupies residues 241–261; sequence IFVFLACWTPHHVLNIISLYG. Residues 262–276 are Extracellular-facing; sequence LKSTSMYNYIKESIP. Residues 277 to 297 form a helical membrane-spanning segment; it reads FVNAIAFVYSAINPIIYIFVI. Residues 298–336 are Cytoplasmic-facing; the sequence is RLTSTYDSDTMDELRSALLDEETTSTEDCSDIEISDISR.

It belongs to the G-protein coupled receptor 1 family.

The protein localises to the host cell membrane. This chain is G-protein coupled receptor homolog FPV027, found in Vertebrata (FPV).